Consider the following 505-residue polypeptide: Probable RNA exonuclease NGL3 (505 aa).

Disordered stretches follow at residues 1–75 (MDSQ…FPTP) and 334–369 (RNGEESDQDDEECDEKSRGEGHSDQPQNPKPESFTA). A compositionally biased stretch (polar residues) spans 10-23 (SPSQKESSSTSGLV). The span at 36 to 54 (HRDQLSVDQIKKIREERAQ) shows a compositional bias: basic and acidic residues. Position 62 is a phosphoserine (Ser-62). Residues 338-347 (ESDQDDEECD) are compositionally biased toward acidic residues.

It belongs to the CCR4/nocturin family.

This Saccharomyces cerevisiae (strain ATCC 204508 / S288c) (Baker's yeast) protein is Probable RNA exonuclease NGL3 (NGL3).